The following is a 955-amino-acid chain: MASLRLPRANPLAFTRWPVTVITAIVYLALLIPLLVVHHVVPSAPSSPPSGLNISEAWADLQVLTNGFHPYNSRRNDVIHSWLLRRINEILDSTPLEQEYRALDEEKPDVFVFDDVYSNLTTYGGTLKDADLGVYFEGTNVIVYIRGWEDDTEHWWEAPNGVPTSRGGVLVNSHYDSVSTGFGATDDGVGVVTCLQLVKYFTTPGHAPRRGLVVLFNNGEEDFLNGARVYSQHPISKLPHTFLNLEGAGAGGRATLFRSSDFEVTGPYMRSPHPFGSVLSANGFDTGLIASQTDYVIFQGNMGLRGLDVAFMEPRARYHTNQDDTRHTSKDSVWHMLSAAVATTEGLVSDSTDRFDGAPNTDGGVPSGSGSQAVWFDLFGSTFVLFQLHTLFALLVTLLIVGPLTLLFTSIALTKADKMYLFRSSAKSEDRLDVVPLQGLRGFFRFPFLFGIPTVVTVGLAYLVTKVNPYIIHSSAYAVWSMMVAAWVFLAWFVSRVADFARPSAFHRIYTLTWMYVLSWVSAVIATVYANQRGLAGGYFIFFFHAGIFLAKWISYLELFALPSKTEYANQLRSASGRASGHGSRRGTTSGEDDGEEAEEEPTESTSLLGSGQRTTFANYVRVGGDNHAVAEEEVIDPNVYGREQAWSYALPKWTWVLQLLLTAPITLIMVGPLALLTISAISQTGQDGGHPLFAYVAIAIFTTIMLTPLLPFIHRYTYHVPLFLLAVFLGTLIYNLVAFPFSDSNRLKLYYVQEVDLDTGVNSATFAGLSPFVKDVSQELPSAAGQTVSCEWHTKRRNLLSCSWEGIAPQPVEGDHPMKDWVSFNISKSTDKPQARFEVSGLNTRACRILFDTPVKNFHVAGSAYDPRFPYDAAGVNEIRLWSRTWENQWTVDVDWDEGALKGNVVCLWSDHNQPGVLPALDEAIQFLPVWAAVTKGSDGLVEGRRAFEIGNDD.

The Cytoplasmic segment spans residues methionine 1–arginine 16. A helical membrane pass occupies residues tryptophan 17–valine 37. Topologically, residues histidine 38–threonine 390 are vacuolar. N-linked (GlcNAc...) asparagine glycans are attached at residues asparagine 53 and asparagine 119. Zn(2+) is bound by residues histidine 174 and aspartate 186. The active-site Proton acceptor is the glutamate 220. The Zn(2+) site is built by glutamate 221, glutamate 246, and histidine 319. Residues leucine 391–isoleucine 411 form a helical membrane-spanning segment. The Cytoplasmic segment spans residues alanine 412 to glycine 442. The chain crosses the membrane as a helical span at residues phenylalanine 443–leucine 463. At valine 464–histidine 473 the chain is on the vacuolar side. Residues serine 474 to valine 494 form a helical membrane-spanning segment. Residues serine 495–arginine 508 lie on the Cytoplasmic side of the membrane. The helical transmembrane segment at isoleucine 509–tyrosine 529 threads the bilayer. Residues alanine 530–arginine 533 are Vacuolar-facing. A helical transmembrane segment spans residues glycine 534 to isoleucine 554. Residues serine 555–tryptophan 656 are Cytoplasmic-facing. Positions serine 574–serine 590 are enriched in low complexity. The segment at serine 574–serine 611 is disordered. The span at glycine 591–threonine 603 shows a compositional bias: acidic residues. Residues valine 657–leucine 677 form a helical membrane-spanning segment. Over threonine 678 to leucine 693 the chain is Vacuolar. Residues phenylalanine 694–isoleucine 714 traverse the membrane as a helical segment. The Cytoplasmic segment spans residues histidine 715–valine 721. The helical transmembrane segment at proline 722–phenylalanine 742 threads the bilayer. Over serine 743–aspartate 955 the chain is Vacuolar. An N-linked (GlcNAc...) asparagine glycan is attached at asparagine 826.

It belongs to the peptidase M28 family. Zn(2+) is required as a cofactor.

It localises to the vacuole membrane. May be involved in vacuolar sorting and osmoregulation. The sequence is that of Vacuolar membrane protease from Aspergillus oryzae (strain ATCC 42149 / RIB 40) (Yellow koji mold).